The chain runs to 160 residues: Endoribonuclease YbeY (160 aa).

Zn(2+) contacts are provided by H118, H122, and H128.

It belongs to the endoribonuclease YbeY family. Zn(2+) is required as a cofactor.

The protein resides in the cytoplasm. Its function is as follows. Single strand-specific metallo-endoribonuclease involved in late-stage 70S ribosome quality control and in maturation of the 3' terminus of the 16S rRNA. The chain is Endoribonuclease YbeY from Treponema pallidum (strain Nichols).